The following is a 394-amino-acid chain: Elongation factor Tu (394 aa).

The region spanning 10–204 (KPHVNIGTIG…AVDSYIPQPV (195 aa)) is the tr-type G domain. The interval 19–26 (GHVDHGKT) is G1. 19–26 (GHVDHGKT) is a GTP binding site. Position 26 (T26) interacts with Mg(2+). The tract at residues 60–64 (GITIS) is G2. Residues 81–84 (DCPG) are G3. Residues 81–85 (DCPGH) and 136–139 (NKID) contribute to the GTP site. A G4 region spans residues 136–139 (NKID). The G5 stretch occupies residues 174-176 (SAL).

It belongs to the TRAFAC class translation factor GTPase superfamily. Classic translation factor GTPase family. EF-Tu/EF-1A subfamily. Monomer.

Its subcellular location is the cytoplasm. The catalysed reaction is GTP + H2O = GDP + phosphate + H(+). Its function is as follows. GTP hydrolase that promotes the GTP-dependent binding of aminoacyl-tRNA to the A-site of ribosomes during protein biosynthesis. This is Elongation factor Tu from Rickettsia conorii (strain ATCC VR-613 / Malish 7).